The primary structure comprises 114 residues: Flagellar hook-basal body complex protein FliE (114 aa).

It belongs to the FliE family.

The protein resides in the bacterial flagellum basal body. This Burkholderia lata (strain ATCC 17760 / DSM 23089 / LMG 22485 / NCIMB 9086 / R18194 / 383) protein is Flagellar hook-basal body complex protein FliE.